We begin with the raw amino-acid sequence, 1225 residues long: uncharacterized protein (1225 aa).

The N-terminal stretch at 1–27 (MKRFLHRVKWPLLLSSIAVSLGIVAVA) is a signal peptide. A lipid anchor (N-palmitoyl cysteine) is attached at Cys-28. Cys-28 is lipidated: S-diacylglycerol cysteine. The disordered stretch occupies residues 995 to 1014 (QSEKSSSNGGQAQLQSTQSS).

This sequence belongs to the MG307/MG309/MG338 family.

It is found in the cell membrane. This is an uncharacterized protein from Mycoplasma genitalium (strain ATCC 33530 / DSM 19775 / NCTC 10195 / G37) (Mycoplasmoides genitalium).